The primary structure comprises 803 residues: MIPVTEFRQFSEQQPAFRVLKPWWDVFTDYLSVAMLMIGVFGCTLQVMQDKIICLPKRVQPSQNQSSVSNVSQAVASTTPLPPPKPSPSNPVTVEMKGLKTDLDLQQYSFINQMCYERALHWYAKYFPYLVLIHTLVFMLCSNFWFKFPGSSSKIEHFISILGKCFDSPWTTRALSEVSGEDSEEKDNRKNNMSRSNTTQSGPEGSLVNSQSLKSIPEKFVVDKSTAGALDKKEGEQAKALFEKVKKFRLHVEEGDILYAMYVRQTVLKVIKFLIIIAYNSALVSKVQFTVDCNVDIQDMTGYKNFSCNHTMAHLFSKLSFCYLCFVSIYGLTCLYTLYWLFYRSLKEYSFEYVRQETGIDDIPDVKNDFAFMLHMIDQYDPLYSKRFAVFLSEVSENKLKQLNLNNEWTPDKLRQKLQTNAHNRLELPLIMLSGLPDTVFEITELQSLKLEIIKNVMIPATIAQLDNLQELSLHQCSVKIHSAALSFLKENLKVLSVKFDDMRELPPWMYGLRNLEELYLVGSLSHDISRNVTLESLRDLKSLKILSIKSNVSKIPQAVVDVSSHLQKMCIHNDGTKLVMLNNLKKMTNLTELELVHCDLERIPHAVFSLLSLQELDLKENNLKSIEEIVSFQHLRKLTVLKLWHNSITYIPEHIKKLTSLERLSFSHNKIEVLPSHLFLCNKIRYLDLSYNDIRFIPPEIGVLQSLQYFSITCNKVESLPDELYFCKKLKTLKIGKNSLSVLSPKIGNLLFLSYLDVKGNHFEILPPELGDCRALKRAGLVVEDALFETLPSDVREQMKTE.

Over 1-22 (MIPVTEFRQFSEQQPAFRVLKP) the chain is Cytoplasmic. A helical membrane pass occupies residues 23 to 43 (WWDVFTDYLSVAMLMIGVFGC). Residues 44 to 125 (TLQVMQDKII…YERALHWYAK (82 aa)) lie on the Extracellular side of the membrane. 2 disulfide bridges follow: Cys-54–Cys-308 and Cys-115–Cys-293. 2 N-linked (GlcNAc...) asparagine glycosylation sites follow: Asn-64 and Asn-70. A helical membrane pass occupies residues 126 to 146 (YFPYLVLIHTLVFMLCSNFWF). The Cytoplasmic segment spans residues 147–266 (KFPGSSSKIE…ILYAMYVRQT (120 aa)). Positions 177 to 209 (EVSGEDSEEKDNRKNNMSRSNTTQSGPEGSLVN) are disordered. Polar residues predominate over residues 191–209 (NNMSRSNTTQSGPEGSLVN). Residues Ser-212 and Ser-215 each carry the phosphoserine modification. A helical membrane pass occupies residues 267 to 287 (VLKVIKFLIIIAYNSALVSKV). The Extracellular portion of the chain corresponds to 288-320 (QFTVDCNVDIQDMTGYKNFSCNHTMAHLFSKLS). Residues 321-341 (FCYLCFVSIYGLTCLYTLYWL) traverse the membrane as a helical segment. The Cytoplasmic portion of the chain corresponds to 342 to 803 (FYRSLKEYSF…SDVREQMKTE (462 aa)). LRR repeat units lie at residues 397 to 419 (ENKL…QKLQ), 420 to 443 (TNAH…VFEI), 446 to 465 (LQSL…TIAQ), 468 to 490 (NLQE…SFLK), 492 to 513 (NLKV…MYGL), 515 to 536 (NLEE…VTLE), 543 to 563 (SLKI…VVDV), 566 to 586 (HLQK…NNLK), 590 to 611 (NLTE…VFSL), 613 to 634 (SLQE…VSFQ), 638 to 659 (KLTV…IKKL), 661 to 682 (SLER…LFLC), 684 to 705 (KIRY…IGVL), 707 to 728 (SLQY…LYFC), 730 to 751 (KLKT…IGNL), 753 to 774 (FLSY…LGDC), and 776 to 799 (ALKR…VREQ).

This sequence belongs to the LRRC8 family. In terms of assembly, heterohexamer; oligomerizes with other LRRC8 proteins (LRRC8A, LRRC8B, LRRC8D and/or LRRC8E) to form a heterohexamer. Homoheptamer; inactive, likely because it is not targeted to the plasma membrane in the absence of LRRC8A. In vivo, the subunit composition may depend primarily on expression levels, and heterooligomeric channels containing various proportions of the different LRRC8 proteins may coexist.

It localises to the cell membrane. The protein localises to the endoplasmic reticulum membrane. The enzyme catalyses chloride(in) = chloride(out). The catalysed reaction is iodide(out) = iodide(in). It catalyses the reaction taurine(out) = taurine(in). It carries out the reaction 2',3'-cGAMP(out) = 2',3'-cGAMP(in). Non-essential component of the volume-regulated anion channel (VRAC, also named VSOAC channel), an anion channel required to maintain a constant cell volume in response to extracellular or intracellular osmotic changes. The VRAC channel conducts iodide better than chloride and can also conduct organic osmolytes like taurine. Plays a redundant role in the efflux of amino acids, such as aspartate and glutamate, in response to osmotic stress. The VRAC channel also mediates transport of immunoreactive cyclic dinucleotide GMP-AMP (2'-3'-cGAMP), an immune messenger produced in response to DNA virus in the cytosol. Channel activity requires LRRC8A plus at least one other family member (LRRC8B, LRRC8C, LRRC8D or LRRC8E); channel characteristics depend on the precise subunit composition. This is Volume-regulated anion channel subunit LRRC8C from Bos taurus (Bovine).